Consider the following 193-residue polypeptide: Peptidyl-tRNA hydrolase (193 aa).

A tRNA-binding site is contributed by Tyr-15. Residue His-20 is the Proton acceptor of the active site. TRNA is bound by residues Phe-65, Asn-67, and Asn-113.

This sequence belongs to the PTH family. In terms of assembly, monomer.

Its subcellular location is the cytoplasm. It carries out the reaction an N-acyl-L-alpha-aminoacyl-tRNA + H2O = an N-acyl-L-amino acid + a tRNA + H(+). Hydrolyzes ribosome-free peptidyl-tRNAs (with 1 or more amino acids incorporated), which drop off the ribosome during protein synthesis, or as a result of ribosome stalling. In terms of biological role, catalyzes the release of premature peptidyl moieties from peptidyl-tRNA molecules trapped in stalled 50S ribosomal subunits, and thus maintains levels of free tRNAs and 50S ribosomes. The chain is Peptidyl-tRNA hydrolase from Ehrlichia ruminantium (strain Welgevonden).